Here is a 306-residue protein sequence, read N- to C-terminus: Glutaminase (306 aa).

Positions 64, 115, 159, 166, 190, 242, and 260 each coordinate substrate.

Belongs to the glutaminase family. In terms of assembly, homotetramer.

The catalysed reaction is L-glutamine + H2O = L-glutamate + NH4(+). In Aliivibrio fischeri (strain ATCC 700601 / ES114) (Vibrio fischeri), this protein is Glutaminase.